The sequence spans 167 residues: Peptide deformylase (167 aa).

Cys-91 and His-133 together coordinate Fe cation. The active site involves Glu-134. His-137 serves as a coordination point for Fe cation.

The protein belongs to the polypeptide deformylase family. It depends on Fe(2+) as a cofactor.

It catalyses the reaction N-terminal N-formyl-L-methionyl-[peptide] + H2O = N-terminal L-methionyl-[peptide] + formate. In terms of biological role, removes the formyl group from the N-terminal Met of newly synthesized proteins. Requires at least a dipeptide for an efficient rate of reaction. N-terminal L-methionine is a prerequisite for activity but the enzyme has broad specificity at other positions. This Buchnera aphidicola subsp. Schizaphis graminum (strain Sg) protein is Peptide deformylase.